The sequence spans 240 residues: NDR1/HIN1-like protein 2 (240 aa).

A helical transmembrane segment spans residues 57–77 (NILIAVAVILGVAALILWLIF). Asn109, Asn141, Asn151, and Asn223 each carry an N-linked (GlcNAc...) asparagine glycan.

As to expression, expressed at low levels in roots, rosette leaves, cauline leaves, stems, flowers and siliques.

Its subcellular location is the cell membrane. May play a role in plant immunity. The sequence is that of NDR1/HIN1-like protein 2 from Arabidopsis thaliana (Mouse-ear cress).